The chain runs to 230 residues: MVGVKITWLGHSAFLLEAEKKLLIDPFISGNPLAPCSPEELNPDIITVTHGHRDHLGDTIEIGKRTRCRIITIHEVANYIKSKGVFAEGMGKGGTVNVEGIKLTMTDALHSSSIDASGFSFDGGSPAGFIIQINGHSIYHAGDTGVFGDMKLIGELYEPELVLLPIGDKFTMGIKEATKAVELILPRTVIPMHYSTFDVIKQDPEEFKRAVEAKVDTKVIIMKPGESIDL.

The protein belongs to the UPF0173 family.

In Methanosarcina barkeri (strain Fusaro / DSM 804), this protein is UPF0173 metal-dependent hydrolase Mbar_A3716.